The primary structure comprises 265 residues: Formyltransferase/hydrolase complex Fhc subunit C (265 aa).

This sequence belongs to the FwdC/FmdC family. Octaheteromer. Part of the formyltransferase/hydrolase complex fhc; composed of FhcA, FhcB, FhcC and FhcD.

The protein localises to the cytoplasm. Its pathway is one-carbon metabolism; formaldehyde degradation; formate from formaldehyde (H(4)MPT route): step 4/5. Its function is as follows. Involved in the transformation of 5-formyl tetrahydromethanopterin (5-formyl-H(4)MPT) to methanofuran (MFR) and formate via the formylmethanofuran (formyl-MFR). This chain is Formyltransferase/hydrolase complex Fhc subunit C (fhcC), found in Methylorubrum extorquens (strain ATCC 14718 / DSM 1338 / JCM 2805 / NCIMB 9133 / AM1) (Methylobacterium extorquens).